Here is a 228-residue protein sequence, read N- to C-terminus: Phosphoribosylformylglycinamidine synthase subunit PurQ (228 aa).

Positions Phe3–Val226 constitute a Glutamine amidotransferase type-1 domain. Cys86 acts as the Nucleophile in catalysis. Residues His195 and Glu197 contribute to the active site.

In terms of assembly, part of the FGAM synthase complex composed of 1 PurL, 1 PurQ and 2 PurS subunits.

The protein localises to the cytoplasm. The catalysed reaction is N(2)-formyl-N(1)-(5-phospho-beta-D-ribosyl)glycinamide + L-glutamine + ATP + H2O = 2-formamido-N(1)-(5-O-phospho-beta-D-ribosyl)acetamidine + L-glutamate + ADP + phosphate + H(+). It catalyses the reaction L-glutamine + H2O = L-glutamate + NH4(+). It functions in the pathway purine metabolism; IMP biosynthesis via de novo pathway; 5-amino-1-(5-phospho-D-ribosyl)imidazole from N(2)-formyl-N(1)-(5-phospho-D-ribosyl)glycinamide: step 1/2. Part of the phosphoribosylformylglycinamidine synthase complex involved in the purines biosynthetic pathway. Catalyzes the ATP-dependent conversion of formylglycinamide ribonucleotide (FGAR) and glutamine to yield formylglycinamidine ribonucleotide (FGAM) and glutamate. The FGAM synthase complex is composed of three subunits. PurQ produces an ammonia molecule by converting glutamine to glutamate. PurL transfers the ammonia molecule to FGAR to form FGAM in an ATP-dependent manner. PurS interacts with PurQ and PurL and is thought to assist in the transfer of the ammonia molecule from PurQ to PurL. The sequence is that of Phosphoribosylformylglycinamidine synthase subunit PurQ from Geobacillus sp. (strain WCH70).